A 377-amino-acid polypeptide reads, in one-letter code: Carboxynorspermidine/carboxyspermidine decarboxylase (377 aa).

Lys41 carries the post-translational modification N6-(pyridoxal phosphate)lysine. Substrate is bound by residues Glu238 and Asp274.

Belongs to the Orn/Lys/Arg decarboxylase class-II family. NspC subfamily. In terms of assembly, homodimer. It depends on pyridoxal 5'-phosphate as a cofactor.

It is found in the cytoplasm. The enzyme catalyses carboxynorspermidine + H(+) = norspermidine + CO2. It carries out the reaction carboxyspermidine + H(+) = spermidine + CO2. Functionally, catalyzes the decarboxylation of carboxynorspermidine and carboxyspermidine. Carboxynorspermidine is decarboxylated 20-fold more efficiently than carboxyspermidine. Exhibits some activity with L-ornithine, but shows no activity with L-arginine, L-lysine or meso-diaminopimelate. The polypeptide is Carboxynorspermidine/carboxyspermidine decarboxylase (Vibrio vulnificus (strain CMCP6)).